The following is a 53-amino-acid chain: Sec-independent protein translocase protein TatA (53 aa).

A helical membrane pass occupies residues 1 to 21 (MGMSLSHLLIVLLIIFVLFGA).

Belongs to the TatA/E family. As to quaternary structure, the Tat system comprises two distinct complexes: a TatABC complex, containing multiple copies of TatA, TatB and TatC subunits, and a separate TatA complex, containing only TatA subunits. Substrates initially bind to the TatABC complex, which probably triggers association of the separate TatA complex to form the active translocon.

It is found in the cell inner membrane. In terms of biological role, part of the twin-arginine translocation (Tat) system that transports large folded proteins containing a characteristic twin-arginine motif in their signal peptide across membranes. TatA could form the protein-conducting channel of the Tat system. The sequence is that of Sec-independent protein translocase protein TatA from Rickettsia conorii (strain ATCC VR-613 / Malish 7).